Consider the following 148-residue polypeptide: MKAVIILGLVLLSVTVQGKIFERCELARTLKRLGLDGYRGISLANWVCLAKWESDYNTQATNYNPGDQSTDYGIFQINSHYWCNNGKTPGAVNACHISCNALLQDNIADAVTCAKRVVSDPQGIRAWVAWRNHCQNRDVSQYVQGCGV.

A signal peptide spans 1-18; that stretch reads MKAVIILGLVLLSVTVQG. Residues 19-148 form the C-type lysozyme domain; that stretch reads KIFERCELAR…VSQYVQGCGV (130 aa). 4 disulfide bridges follow: Cys-24-Cys-146, Cys-48-Cys-134, Cys-83-Cys-99, and Cys-95-Cys-113. Active-site residues include Glu-53 and Asp-71.

It belongs to the glycosyl hydrolase 22 family. In terms of assembly, monomer.

It localises to the secreted. It carries out the reaction Hydrolysis of (1-&gt;4)-beta-linkages between N-acetylmuramic acid and N-acetyl-D-glucosamine residues in a peptidoglycan and between N-acetyl-D-glucosamine residues in chitodextrins.. Lysozymes have primarily a bacteriolytic function; those in tissues and body fluids are associated with the monocyte-macrophage system and enhance the activity of immunoagents. In Papio anubis (Olive baboon), this protein is Lysozyme C (LYZ).